A 388-amino-acid polypeptide reads, in one-letter code: Dual specificity mitogen-activated protein kinase kinase 1 (388 aa).

A disordered region spans residues 1–20 (PIQLNPAPDGSAVNGTSSAE). The 296-residue stretch at 61 to 356 (FEKISELGAG…LKQLMIHAFI (296 aa)) folds into the Protein kinase domain. Residues 67 to 75 (LGAGNGGVV) and K90 each bind ATP. The active-site Proton acceptor is D183. Phosphoserine; by RAF occurs at positions 211 and 215. Residues 275–299 (DSPVTETSPRQRAPGRPMSSYGSDS) are disordered.

It belongs to the protein kinase superfamily. STE Ser/Thr protein kinase family. MAP kinase kinase subfamily. Post-translationally, MAPKK is itself dependent on Ser/Thr phosphorylation for activity catalyzed by MAP kinase kinase kinases (RAF or MEKK1).

The protein localises to the cytoplasm. It localises to the cytoskeleton. It is found in the microtubule organizing center. The protein resides in the centrosome. Its subcellular location is the spindle pole body. The protein localises to the nucleus. The enzyme catalyses L-seryl-[protein] + ATP = O-phospho-L-seryl-[protein] + ADP + H(+). The catalysed reaction is L-threonyl-[protein] + ATP = O-phospho-L-threonyl-[protein] + ADP + H(+). It carries out the reaction L-tyrosyl-[protein] + ATP = O-phospho-L-tyrosyl-[protein] + ADP + H(+). Dual specificity protein kinase which acts as an essential component of the MAP kinase signal transduction pathway. Binding of extracellular ligands such as growth factors, cytokines and hormones to their cell-surface receptors activates RAS and this initiates RAF1 activation. RAF1 then further activates the dual-specificity protein kinases MAP2K1/MEK1 and MAP2K2/MEK2. Both MAP2K1/MEK1 and MAP2K2/MEK2 function specifically in the MAPK/ERK cascade, and catalyze the concomitant phosphorylation of a threonine and a tyrosine residue in a Thr-Glu-Tyr sequence located in the extracellular signal-regulated kinases MAPK3/ERK1 and MAPK1/ERK2, leading to their activation and further transduction of the signal within the MAPK/ERK cascade. Depending on the cellular context, this pathway mediates diverse biological functions such as cell growth, adhesion, survival and differentiation predominantly through the regulation of transcription, metabolism and cytoskeletal rearrangements. This Serinus canaria (Island canary) protein is Dual specificity mitogen-activated protein kinase kinase 1 (MAP2K1).